The chain runs to 364 residues: Lytic cellulose monooxygenase (364 aa).

The first 34 residues, 1–34, serve as a signal peptide directing secretion; the sequence is MARRSRYISLAAVMATLLSALGVTFLLGQGRAEA. 2 residues coordinate Cu cation: His35 and His144. One can recognise a Chitin-binding type-4 domain in the interval 35 to 225; that stretch reads HGVAMMPGSR…QENFFSCSDV (191 aa). The tract at residues 234-261 is disordered; that stretch reads VTGIRGSGGTPTPTPTPTTPPTTPPPTH. Residues 245 to 260 are compositionally biased toward pro residues; sequence TPTPTPTTPPTTPPPT. In terms of domain architecture, CBM2 spans 258–364; sequence PPTHSGSCMA…PVGTIGCVAP (107 aa).

Cu(2+) serves as cofactor.

Its subcellular location is the secreted. It carries out the reaction [(1-&gt;4)-beta-D-glucosyl]n+m + reduced acceptor + O2 = [(1-&gt;4)-beta-D-glucosyl]m-1-(1-&gt;4)-D-glucono-1,5-lactone + [(1-&gt;4)-beta-D-glucosyl]n + acceptor + H2O.. It functions in the pathway glycan metabolism; cellulose degradation. In terms of biological role, involved in the degradation of lignocellulosic biomass. Catalyzes the oxidative cleavage of glycosidic bonds in cellulosic substrates via a copper-dependent mechanism. Degrades phosphoric acid swollen cellulose (PASC) to oxidized cellooligosaccharides with degrees of polymerization of 4-8. Also shows activity on agricultural fiber paper pulps such as flax pulp. Is not active on chitin. The protein is Lytic cellulose monooxygenase of Streptomyces ambofaciens (strain ATCC 23877 / 3486 / DSM 40053 / JCM 4204 / NBRC 12836 / NRRL B-2516).